Consider the following 372-residue polypeptide: UDP-N-acetylglucosamine 2-epimerase (372 aa).

Substrate is bound by residues Arg-10, Lys-15, Asp-95, Glu-117, His-212, Gln-270, Phe-275, 289–291, Glu-295, and Arg-312; that span reads SGG.

Belongs to the UDP-N-acetylglucosamine 2-epimerase family.

The catalysed reaction is UDP-N-acetyl-alpha-D-glucosamine = UDP-N-acetyl-alpha-D-mannosamine. The protein operates within capsule biogenesis; capsule polysaccharide biosynthesis. Its activity is regulated as follows. Activated by UDP-GlcNAc and inhibited by 2-acetamidoglucal and UDP. Activity is strongly decreased in the presence of Co(2+) and abolished in the presence of Mn(2+) or Zn(2+). Functionally, catalyzes the interconversion between UDP-N-acetylglucosamine (UDP-GlcNAc) and UDP-N-acetylmannosamine (UDP-ManNAc). Involved in the biosynthesis of the capsular polysaccharides. In vitro, can also use several chemoenzymatically synthesized UDP-ManNAc derivatives as substrates, with lower efficiency. In Neisseria meningitidis serogroup A / serotype 4A (strain DSM 15465 / Z2491), this protein is UDP-N-acetylglucosamine 2-epimerase.